The chain runs to 275 residues: NH(3)-dependent NAD(+) synthetase (275 aa).

46–53 contributes to the ATP binding site; it reads GISGGQDS. Asp52 contacts Mg(2+). Residue Arg140 coordinates deamido-NAD(+). Thr160 contacts ATP. Mg(2+) is bound at residue Glu165. The deamido-NAD(+) site is built by Lys173 and Asp180. Residues Lys189 and Thr211 each coordinate ATP. 260–261 contacts deamido-NAD(+); sequence HK.

Belongs to the NAD synthetase family. In terms of assembly, homodimer.

It catalyses the reaction deamido-NAD(+) + NH4(+) + ATP = AMP + diphosphate + NAD(+) + H(+). It functions in the pathway cofactor biosynthesis; NAD(+) biosynthesis; NAD(+) from deamido-NAD(+) (ammonia route): step 1/1. Functionally, catalyzes the ATP-dependent amidation of deamido-NAD to form NAD. Uses ammonia as a nitrogen source. The protein is NH(3)-dependent NAD(+) synthetase of Escherichia coli O139:H28 (strain E24377A / ETEC).